A 416-amino-acid chain; its full sequence is Adenylosuccinate synthetase (416 aa).

Residues 13–19 (GDEGKGK) and 41–43 (GHT) contribute to the GTP site. Residue Asp-14 is the Proton acceptor of the active site. 2 residues coordinate Mg(2+): Asp-14 and Gly-41. IMP-binding positions include 14–17 (DEGK), 39–42 (NAGH), Thr-126, Arg-140, Gln-220, Thr-235, and Arg-299. His-42 functions as the Proton donor in the catalytic mechanism. 295 to 301 (VSTGRKR) is a substrate binding site. GTP-binding positions include Arg-301, 327–329 (KLD), and 405–407 (STS).

The protein belongs to the adenylosuccinate synthetase family. In terms of assembly, homodimer. It depends on Mg(2+) as a cofactor.

The protein localises to the cytoplasm. The enzyme catalyses IMP + L-aspartate + GTP = N(6)-(1,2-dicarboxyethyl)-AMP + GDP + phosphate + 2 H(+). Its pathway is purine metabolism; AMP biosynthesis via de novo pathway; AMP from IMP: step 1/2. Plays an important role in the de novo pathway of purine nucleotide biosynthesis. Catalyzes the first committed step in the biosynthesis of AMP from IMP. This chain is Adenylosuccinate synthetase, found in Campylobacter jejuni subsp. jejuni serotype O:2 (strain ATCC 700819 / NCTC 11168).